We begin with the raw amino-acid sequence, 480 residues long: MNQKIMAVIAAGSMLFGGAGVYAGINLLEMDKPQTAAVPATAQADSERDKAMDKIEKAYELISNEYVEKVDREKLLEGAIQGMLSTLNDPYSVYMDKQTAKQFSDSLDSSFEGIGAEVGMEDGKIIIVSPFKKSPAEKAGLKPNDEIISINGESMAGKDLNHAVLKIRGKKGSSVSMKIQRPGTKKQLSFRIKRAEIPLETVFASEKKVQGHSVGYIAISTFSEHTAEDFAKALRELEKKEIEGLVIDVRGNPGGYLQSVEEILKHFVTKDQPYIQIAERNGDKKRYFSTLTHKKAYPVNVITDKGSASASEILAGALKEAGHYDVVGDTSFGKGTVQQAVPMGDGSNIKLTLYKWLTPNGNWIHKKGIEPTIAIKQPDYFSAGPLQLKEPLKVDMNNEDVKHAQVLLKGLSFDPGREDGYFSKDMKKAVMAFQDQNKLNKTGVIDTRTAETLNQQIEKKKSDEKNDLQLQTALKSLFVN.

The signal sequence occupies residues 1 to 23; sequence MNQKIMAVIAAGSMLFGGAGVYA. Residues 92 to 182 form the PDZ domain; the sequence is SVYMDKQTAK…SSVSMKIQRP (91 aa). The segment at 113–116 is peptide binding; the sequence is GIGA. Ser-309 acts as the Nucleophile in catalysis. Residues Lys-334 and Gln-338 each act as charge relay system in the active site.

Belongs to the peptidase S41A family. In terms of assembly, homodimer. Post-translationally, is cleaved by SpoIVB in vitro and in vivo but this cleavage does not appear to be necessary for CtpB activation. CtpB can also cleave itself in vivo.

The protein localises to the forespore intermembrane space. It catalyses the reaction The enzyme shows specific recognition of a C-terminal tripeptide, Xaa-Yaa-Zaa, in which Xaa is preferably Ala or Leu, Yaa is preferably Ala or Tyr, and Zaa is preferably Ala, but then cleaves at a variable distance from the C-terminus. A typical cleavage is -Ala-Ala-|-Arg-Ala-Ala-Lys-Glu-Asn-Tyr-Ala-Leu-Ala-Ala.. Its activity is regulated as follows. Activated by peptide binding to the PDZ domain. In terms of biological role, involved in the signal transduction pathway leading to the proteolytic activation of the mother cell transcription factor pro-sigma-K during sporulation. The signaling serine protease CtpB triggers pro-sigma-K processing by cleaving the pre-processed regulatory protein SpoIVFA and is necessary for the proper timing of sigma-K activation. This is Carboxy-terminal processing protease CtpB (ctpB) from Bacillus subtilis (strain 168).